A 352-amino-acid polypeptide reads, in one-letter code: UDP-3-O-acylglucosamine N-acyltransferase (352 aa).

The Proton acceptor role is filled by His242.

This sequence belongs to the transferase hexapeptide repeat family. LpxD subfamily. In terms of assembly, homotrimer.

The enzyme catalyses a UDP-3-O-[(3R)-3-hydroxyacyl]-alpha-D-glucosamine + a (3R)-hydroxyacyl-[ACP] = a UDP-2-N,3-O-bis[(3R)-3-hydroxyacyl]-alpha-D-glucosamine + holo-[ACP] + H(+). It functions in the pathway bacterial outer membrane biogenesis; LPS lipid A biosynthesis. Catalyzes the N-acylation of UDP-3-O-acylglucosamine using 3-hydroxyacyl-ACP as the acyl donor. Is involved in the biosynthesis of lipid A, a phosphorylated glycolipid that anchors the lipopolysaccharide to the outer membrane of the cell. This Alkalilimnicola ehrlichii (strain ATCC BAA-1101 / DSM 17681 / MLHE-1) protein is UDP-3-O-acylglucosamine N-acyltransferase.